Reading from the N-terminus, the 245-residue chain is MKIDILSIFPDMFSGVTGNSIIKKAIENERVEVEVTDFREYAEGKHHIVDDYPYGGGAGMLLKAQPIFDAVQAVKEKQPETKPRVILMDPAGKRFDQKMAEEFAEEEHLVFICGHYEGYDERIREHLVTDEVSIGDYILTGGEIGAMIVMDSVIRLLPGVLGNKDSAVTDSFSTGLLEHPHYTRPADFRGMKVPDILLSGNHAWIEEWRDKESLKRTYERRPDLLKNYPLTDKQKTWLKEWSDSK.

S-adenosyl-L-methionine-binding positions include Gly114 and 134-139; that span reads IGDYIL.

The protein belongs to the RNA methyltransferase TrmD family. As to quaternary structure, homodimer.

Its subcellular location is the cytoplasm. It carries out the reaction guanosine(37) in tRNA + S-adenosyl-L-methionine = N(1)-methylguanosine(37) in tRNA + S-adenosyl-L-homocysteine + H(+). In terms of biological role, specifically methylates guanosine-37 in various tRNAs. This chain is tRNA (guanine-N(1)-)-methyltransferase, found in Listeria welshimeri serovar 6b (strain ATCC 35897 / DSM 20650 / CCUG 15529 / CIP 8149 / NCTC 11857 / SLCC 5334 / V8).